The primary structure comprises 699 residues: MTNPIVASQPQMAQQGIRRLLILSGQADWSRQQAIMLRQHLAGDWLWLSEQPPEGVNSISPTAARTLLGQENLHGVFDATDGLNIEALAIVAGTLRAGSWLLLLVPEWDDWPQRPDKDSLRWSEQPAPIVTANFIRHLQRQFLADPDVVLWQQDRPLILPAVGSRPCWQQPDGSPTAQQQHILQRLMQADSGIWVLTAARGRGKSTLAGMLVTHWQGACWVTGPGKAATQVLNQQAGERARFWAPDALLDYCQRHDVSDIDWLLIDEAAAIPTPLLSALLAYFPRALLTTTVQGYEGTGRGFLLKFCATLGDWHHLTLTDPIRWATDDPLERVMDNAMLFHDELLGNHPLPKRPPVAQIEIPLYEQRDWRDNPELLRRFYGLLSTAHYRTTPLDLRRLMDAPGMHFSAARVADAVIGALWLVDEGGLSEALALDVWAGRRRPRGNLVAQSLAAHSGQWQAPTLLSRRISRVAVTAAWRQQGIARRMIAAEQAHARQQQCDFLSVSFGYTAELAHFWHRCGFRLVRIGSHKEASSGCYTAMALLPLSPAGEALCQAAQQQLKRDWYWLQQWIGIPTPVFLRLPEPPEVTLTDDDWRELAGFAFAFRPLEASLPALQRLLLHTELPLSALRHYLQLRTPQSEIINTLGLIGRKALVALWRQEAAEGMAMIDVDKMIMSAKPSARCSTVRLPGRKNLTICQC.

ATP contacts are provided by residues Gln-179, 201–210 (GRGKSTLAGM), and Arg-323. Residues 359-543 (IEIPLYEQRD…SGCYTAMALL (185 aa)) form the N-acetyltransferase domain. Acetyl-CoA-binding positions include 471 to 473 (VAV), Glu-511, and Arg-518.

Belongs to the RNA cytidine acetyltransferase family. TmcA subfamily.

The protein resides in the cytoplasm. The catalysed reaction is cytidine(34) in elongator tRNA(Met) + acetyl-CoA + ATP + H2O = N(4)-acetylcytidine(34) in elongator tRNA(Met) + ADP + phosphate + CoA + H(+). In terms of biological role, catalyzes the formation of N(4)-acetylcytidine (ac(4)C) at the wobble position of tRNA(Met), by using acetyl-CoA as an acetyl donor and ATP (or GTP). In Yersinia pestis (strain D106004), this protein is tRNA(Met) cytidine acetyltransferase TmcA.